Here is a 118-residue protein sequence, read N- to C-terminus: Large ribosomal subunit protein bL20 (118 aa).

It belongs to the bacterial ribosomal protein bL20 family.

In terms of biological role, binds directly to 23S ribosomal RNA and is necessary for the in vitro assembly process of the 50S ribosomal subunit. It is not involved in the protein synthesizing functions of that subunit. The chain is Large ribosomal subunit protein bL20 from Lactobacillus delbrueckii subsp. bulgaricus (strain ATCC BAA-365 / Lb-18).